Here is a 206-residue protein sequence, read N- to C-terminus: MELKLLQDNGQVGAGVAASPEVFGRDYNEALVHQIVVAYQANARSGNRKQKDREEVKHTTKKPWRQKGTGRARAGMSSSPLWRGGGRIFPNSPEENFSQKVNKKMFRAGMRSIYSQLAREGRINVVDGFTVDAPKTKLLADKFKAMGLDSVLIITDSLDENLYLASRNLPHVAVVEPRQADPLSLVHYKKVLVTKAAVAQIEELLK.

The disordered stretch occupies residues 43-78 (ARSGNRKQKDREEVKHTTKKPWRQKGTGRARAGMSS). The span at 49–58 (KQKDREEVKH) shows a compositional bias: basic and acidic residues. Positions 59–70 (TTKKPWRQKGTG) are enriched in basic residues.

It belongs to the universal ribosomal protein uL4 family. Part of the 50S ribosomal subunit.

Functionally, one of the primary rRNA binding proteins, this protein initially binds near the 5'-end of the 23S rRNA. It is important during the early stages of 50S assembly. It makes multiple contacts with different domains of the 23S rRNA in the assembled 50S subunit and ribosome. In terms of biological role, forms part of the polypeptide exit tunnel. The chain is Large ribosomal subunit protein uL4 from Cupriavidus pinatubonensis (strain JMP 134 / LMG 1197) (Cupriavidus necator (strain JMP 134)).